The primary structure comprises 67 residues: Probable Sec-independent protein translocase protein TatE (67 aa).

The chain crosses the membrane as a helical span at residues 1 to 21 (MEGISLAKLLIVGALIVLLFG). The disordered stretch occupies residues 43–67 (MNDDSDATSKTASEDKNAGQAVHKE). Residues 54–67 (ASEDKNAGQAVHKE) show a composition bias toward basic and acidic residues.

The protein belongs to the TatA/E family. TatE subfamily.

The protein localises to the cell inner membrane. Functionally, part of the twin-arginine translocation (Tat) system that transports large folded proteins containing a characteristic twin-arginine motif in their signal peptide across membranes. TatE shares overlapping functions with TatA. This Erwinia tasmaniensis (strain DSM 17950 / CFBP 7177 / CIP 109463 / NCPPB 4357 / Et1/99) protein is Probable Sec-independent protein translocase protein TatE.